A 45-amino-acid chain; its full sequence is Major cold shock protein (45 aa).

One can recognise a CSD domain in the interval 1–45; the sequence is EKGFGFISTENGQDVFAHFSAIQTNGFKTLEEGQKVEFDVEEGQR.

Homodimer.

It is found in the cytoplasm. This is Major cold shock protein (cspA) from Streptococcus dysgalactiae.